The chain runs to 129 residues: Cytochrome c-type protein SHP (129 aa).

An N-terminal signal peptide occupies residues Met1–Ala17. Heme c contacts are provided by Cys60, Cys63, and His64. An intrachain disulfide couples Cys106 to Cys114.

Post-translationally, binds 1 heme c group covalently per subunit.

In terms of biological role, high-spin cytochrome. Transiently bind oxygen during autoxidation, which occurs with a half-life of 3 minutes with a 4-fold excess of O(2). Also binds carbon monoxide, azide and cyanide. This is Cytochrome c-type protein SHP (shp) from Cereibacter sphaeroides (strain ATCC 17023 / DSM 158 / JCM 6121 / CCUG 31486 / LMG 2827 / NBRC 12203 / NCIMB 8253 / ATH 2.4.1.) (Rhodobacter sphaeroides).